Reading from the N-terminus, the 149-residue chain is Protein E6 (149 aa).

2 zinc fingers span residues 30 to 66 (CVYC…CTKC) and 103 to 139 (CITC…CIAC). The PDZ-binding domain signature appears at 147-149 (TQV).

Belongs to the papillomaviridae E6 protein family. Forms homodimers. Interacts with ubiquitin-protein ligase UBE3A/E6-AP and thus forms a complex with human TP53. Interacts with human NFX1 and MAGI3. Interacts with human IRF3; this interaction inhibits the establishment of antiviral state. Interacts with human TYK2; this interaction inhibits JAK-STAT activation by interferon alpha. Interacts with host DLG1; this interaction leads to the proteasomal degradation of DLG1.

The protein localises to the host cytoplasm. It localises to the host nucleus. Functionally, plays a major role in the induction and maintenance of cellular transformation. Acts mainly as an oncoprotein by stimulating the destruction of many host cell key regulatory proteins. E6 associates with host UBE3A/E6-AP ubiquitin-protein ligase, and inactivates tumor suppressors TP53 and TP73 by targeting them to the 26S proteasome for degradation. In turn, DNA damage and chromosomal instabilities increase and lead to cell proliferation and cancer development. The complex E6/E6AP targets several other substrates to degradation via the proteasome including host DLG1 or NFX1, a repressor of human telomerase reverse transcriptase (hTERT). The resulting increased expression of hTERT prevents the shortening of telomere length leading to cell immortalization. Other cellular targets including BAK1, Fas-associated death domain-containing protein (FADD) and procaspase 8, are degraded by E6/E6AP causing inhibition of apoptosis. E6 also inhibits immune response by interacting with host IRF3 and TYK2. These interactions prevent IRF3 transcriptional activities and inhibit TYK2-mediated JAK-STAT activation by interferon alpha resulting in inhibition of the interferon signaling pathway. The sequence is that of Protein E6 from Human papillomavirus 31.